The sequence spans 138 residues: MAKSIPKTGSRKNVRIGSRNQTRKIPKGIIHVQASFNNTIVTITDVRGRVISWSSAGTCGFKGTRRGTPFAAQTAAGNAIRTVSDQGMQRAEIMIKGPGLGRDAALRAIRRSGILLNFIRDVTPMPHNGCRSPKKRRV.

The disordered stretch occupies residues 1–22 (MAKSIPKTGSRKNVRIGSRNQT).

The protein belongs to the universal ribosomal protein uS11 family. In terms of assembly, part of the 30S ribosomal subunit.

Its subcellular location is the plastid. The protein localises to the chloroplast. The chain is Small ribosomal subunit protein uS11c from Phaseolus angularis (Azuki bean).